The primary structure comprises 546 residues: Undecaprenyl phosphate-alpha-4-amino-4-deoxy-L-arabinose arabinosyl transferase (546 aa).

12 consecutive transmembrane segments (helical) span residues 6–26 (INLAVIVPLFFIMLYLLPLGL), 87–107 (AASAFSTLGAAFCLFLLVGRF), 113–133 (AWVTVSVFLSLFLVSNLGTYS), 177–197 (LLTKGFLALALPVIVVVPFMI), 208–228 (WGWWVMLVALIVTLPWALAIH), 260–280 (YYLPYLLLGTLPWLFLAPSAI), 289–309 (SPLLRYALLWALIPFIFFSAA), 313–333 (LVTYILPCMAPLAIILAQGII), 345–365 (IGSVINCAFFSLISVAVIVLF), 380–400 (PWLLVVVCGSWAVLAYISIKA), 410–430 (YMLMPLSLFLLAWAIIPNISI), and 450–467 (AILIADYPSTMSAFNWYF).

It belongs to the glycosyltransferase 83 family.

It is found in the cell inner membrane. It catalyses the reaction 4-amino-4-deoxy-alpha-L-arabinopyranosyl di-trans,octa-cis-undecaprenyl phosphate + lipid IVA = lipid IIA + di-trans,octa-cis-undecaprenyl phosphate.. It participates in lipopolysaccharide metabolism; 4-amino-4-deoxy-beta-L-arabinose-lipid A biosynthesis. Its function is as follows. Catalyzes the transfer of the L-Ara4N moiety of the glycolipid undecaprenyl phosphate-alpha-L-Ara4N to lipid A. The modified arabinose is attached to lipid A and is required for resistance to polymyxin and cationic antimicrobial peptides. This chain is Undecaprenyl phosphate-alpha-4-amino-4-deoxy-L-arabinose arabinosyl transferase, found in Shewanella sediminis (strain HAW-EB3).